Here is a 317-residue protein sequence, read N- to C-terminus: Ribose-phosphate pyrophosphokinase A (317 aa).

Mg(2+) is bound by residues aspartate 130, histidine 132, and aspartate 145. Residues 212 to 227 (KDKVALIVDDMADTCG) are binding of phosphoribosylpyrophosphate.

This sequence belongs to the ribose-phosphate pyrophosphokinase family. Mg(2+) is required as a cofactor.

It carries out the reaction D-ribose 5-phosphate + ATP = 5-phospho-alpha-D-ribose 1-diphosphate + AMP + H(+). The protein operates within metabolic intermediate biosynthesis; 5-phospho-alpha-D-ribose 1-diphosphate biosynthesis; 5-phospho-alpha-D-ribose 1-diphosphate from D-ribose 5-phosphate (route I): step 1/1. This Dictyostelium discoideum (Social amoeba) protein is Ribose-phosphate pyrophosphokinase A (prsA).